The primary structure comprises 370 residues: tRNA-specific 2-thiouridylase MnmA (370 aa).

ATP contacts are provided by residues 11-18 (AMSGGVDS) and methionine 37. The segment at 99–101 (NPD) is interaction with target base in tRNA. The Nucleophile role is filled by cysteine 104. A disulfide bridge connects residues cysteine 104 and cysteine 201. Glycine 129 lines the ATP pocket. Residues 151 to 153 (KDQ) form an interaction with tRNA region. Cysteine 201 serves as the catalytic Cysteine persulfide intermediate. Residues 313–314 (RY) are interaction with tRNA.

It belongs to the MnmA/TRMU family. Interacts with TusE.

It localises to the cytoplasm. The catalysed reaction is S-sulfanyl-L-cysteinyl-[protein] + uridine(34) in tRNA + AH2 + ATP = 2-thiouridine(34) in tRNA + L-cysteinyl-[protein] + A + AMP + diphosphate + H(+). In terms of biological role, catalyzes the 2-thiolation of uridine at the wobble position (U34) of tRNA(Lys), tRNA(Glu) and tRNA(Gln), leading to the formation of s(2)U34, the first step of tRNA-mnm(5)s(2)U34 synthesis. Sulfur is provided by IscS, via a sulfur-relay system. Binds ATP and its substrate tRNAs. The polypeptide is tRNA-specific 2-thiouridylase MnmA (Buchnera aphidicola subsp. Baizongia pistaciae (strain Bp)).